A 267-amino-acid chain; its full sequence is 5'-nucleotidase SurE (267 aa).

4 residues coordinate a divalent metal cation: Asp9, Asp10, Ser41, and Asn95.

It belongs to the SurE nucleotidase family. A divalent metal cation serves as cofactor.

Its subcellular location is the cytoplasm. It carries out the reaction a ribonucleoside 5'-phosphate + H2O = a ribonucleoside + phosphate. In terms of biological role, nucleotidase that shows phosphatase activity on nucleoside 5'-monophosphates. The polypeptide is 5'-nucleotidase SurE (Aeropyrum pernix (strain ATCC 700893 / DSM 11879 / JCM 9820 / NBRC 100138 / K1)).